Consider the following 108-residue polypeptide: Translation initiation factor 1A (108 aa).

In terms of domain architecture, S1-like spans Ser11–Ser85.

The protein belongs to the eIF-1A family.

Its function is as follows. Seems to be required for maximal rate of protein biosynthesis. Enhances ribosome dissociation into subunits and stabilizes the binding of the initiator Met-tRNA(I) to 40 S ribosomal subunits. The protein is Translation initiation factor 1A (eIF1A) of Sulfurisphaera tokodaii (strain DSM 16993 / JCM 10545 / NBRC 100140 / 7) (Sulfolobus tokodaii).